Reading from the N-terminus, the 172-residue chain is Large ribosomal subunit protein uL10 (172 aa).

It belongs to the universal ribosomal protein uL10 family. In terms of assembly, part of the ribosomal stalk of the 50S ribosomal subunit. The N-terminus interacts with L11 and the large rRNA to form the base of the stalk. The C-terminus forms an elongated spine to which L12 dimers bind in a sequential fashion forming a multimeric L10(L12)X complex.

Its function is as follows. Forms part of the ribosomal stalk, playing a central role in the interaction of the ribosome with GTP-bound translation factors. In Leifsonia xyli subsp. xyli (strain CTCB07), this protein is Large ribosomal subunit protein uL10.